A 130-amino-acid chain; its full sequence is S-protein homolog 30 (130 aa).

Asparagine 64 and asparagine 77 each carry an N-linked (GlcNAc...) asparagine glycan.

Belongs to the plant self-incompatibility (S1) protein family.

Its subcellular location is the secreted. The protein is S-protein homolog 30 of Arabidopsis thaliana (Mouse-ear cress).